The primary structure comprises 649 residues: Glucan endo-1,3-beta-glucosidase btgC (649 aa).

2 disordered regions span residues 1–50 (MGDR…AHTH) and 110–224 (YHTT…AGGA). Over 1–274 (MGDRSEQYGD…PRPSGASRKR (274 aa)) the chain is Cytoplasmic. Over residues 144-157 (GSSAALSAAGAPAG) the composition is skewed to low complexity. The span at 198–208 (NPDDILDDGDD) shows a compositional bias: acidic residues. The helical; Signal-anchor for type II membrane protein transmembrane segment at 275 to 295 (GWIIGGILAFIVIGAIVGGAV) threads the bilayer. The Extracellular portion of the chain corresponds to 296 to 649 (GGTLGNRRSE…IPDCGGKTAA (354 aa)). Residues 301 to 329 (NRRSETASESSEVSADDDTETNGDLDKNS) form a disordered region. Acidic residues predominate over residues 314–323 (SADDDTETNG). 3 N-linked (GlcNAc...) asparagine glycosylation sites follow: asparagine 369, asparagine 392, and asparagine 420. Glutamate 452 (proton donor) is an active-site residue. The Nucleophile role is filled by glutamate 551. Residue asparagine 596 is glycosylated (N-linked (GlcNAc...) asparagine).

It belongs to the glycosyl hydrolase 17 family.

Its subcellular location is the cell membrane. It catalyses the reaction Hydrolysis of (1-&gt;3)-beta-D-glucosidic linkages in (1-&gt;3)-beta-D-glucans.. Glucanases play a role in cell expansion during growth, in cell-cell fusion during mating, and in spore release during sporulation. This enzyme may be involved in beta-glucan degradation. Active on laminarin and lichenan. The sequence is that of Glucan endo-1,3-beta-glucosidase btgC (btgC) from Emericella nidulans (strain FGSC A4 / ATCC 38163 / CBS 112.46 / NRRL 194 / M139) (Aspergillus nidulans).